We begin with the raw amino-acid sequence, 151 residues long: Acidic phospholipase A2 4 (151 aa).

The N-terminal stretch at 1 to 27 (MYPAHLLVLLAVCVSLLGAASIPARPL) is a signal peptide. 7 cysteine pairs are disulfide-bonded: Cys38/Cys104, Cys54/Cys151, Cys56/Cys72, Cys71/Cys132, Cys78/Cys125, Cys88/Cys118, and Cys111/Cys123. Tyr55, Gly57, and Gly59 together coordinate Ca(2+). His75 is an active-site residue. Asp76 is a Ca(2+) binding site. The active site involves Asp126.

Belongs to the phospholipase A2 family. Group I subfamily. D49 sub-subfamily. Requires Ca(2+) as cofactor. As to expression, expressed by the venom gland.

Its subcellular location is the secreted. It carries out the reaction a 1,2-diacyl-sn-glycero-3-phosphocholine + H2O = a 1-acyl-sn-glycero-3-phosphocholine + a fatty acid + H(+). In terms of biological role, PLA2 catalyzes the calcium-dependent hydrolysis of the 2-acyl groups in 3-sn-phosphoglycerides. The sequence is that of Acidic phospholipase A2 4 from Tropidechis carinatus (Australian rough-scaled snake).